A 613-amino-acid polypeptide reads, in one-letter code: YTH domain-containing family protein 2 (613 aa).

3 disordered regions span residues 1–43, 215–234, and 244–396; these read MSAS…AQPR, SQVSTAPTMPPASMAPAKTA, and AKPQ…TVPA. Positions 2–397 are localization to mRNA processing bodies (P-bodies); sequence SASSLLEQRP…GMGGITVPAE (396 aa). Polar residues predominate over residues 16–27; sequence NKVQNGAVTQKD. 3 stretches are compositionally biased toward low complexity: residues 218–234, 295–307, and 345–360; these read STAPTMPPASMAPAKTA, NGQPPNQSSPQPG, and PPQLSQGPPASQPSQP. The interval 398-613 is interaction with m6A-containing mRNAs; that stretch reads PHPVLEKLRM…RMQDRQGRVK (216 aa). Positions 423-557 constitute a YTH domain; it reads GRVFIIKSYS…DKARQVLKII (135 aa). Residues 429-431, aspartate 435, 445-446, asparagine 475, tryptophan 499, and tryptophan 504 each bind RNA; these read KSY and WC. Composition is skewed to basic and acidic residues over residues 578–587 and 604–613; these read EEEESVKKVE and RMQDRQGRVK. Residues 578-613 are disordered; that stretch reads EEEESVKKVEVQGSDPYSNNSSRSHYRMQDRQGRVK.

The protein belongs to the YTHDF family. YTHDF2 subfamily.

It is found in the cytoplasm. Its subcellular location is the cytosol. It localises to the P-body. The protein resides in the stress granule. The protein localises to the nucleus. Its function is as follows. Specifically recognizes and binds N6-methyladenosine (m6A)-containing RNAs, and regulates their stability. M6A is a modification present at internal sites of mRNAs and some non-coding RNAs and plays a role in mRNA stability and processing. Acts as a regulator of mRNA stability by promoting degradation of m6A-containing mRNAs. The YTHDF paralogs (ythdf1, ythdf2 and ythdf3) share m6A-containing mRNAs targets and act redundantly to mediate mRNA degradation and cellular differentiation. Plays a key role in maternal-to-zygotic transition during early embryonic development, the process during which maternally inherited mRNAs are degraded: acts by binding m6A-containing maternal mRNAs and promoting their degradation. More than one-third of maternal mRNAs can be modified by m6A. Binding to m6A-containing mRNAs results in mRNA degradation. Also involved in hematopoietic stem cells specification by binding to m6A-containing mRNAs, such as notch1a, and promote their degradation. The decreased Notch signaling following notch1a degradation promotes endothelial to hematopoietic transition. Promotes formation of phase-separated membraneless compartments, such as P-bodies or stress granules, by undergoing liquid-liquid phase separation upon binding to mRNAs containing multiple m6A-modified residues: polymethylated mRNAs act as a multivalent scaffold for the binding of YTHDF proteins, juxtaposing their disordered regions and thereby leading to phase separation. The resulting mRNA-YTHDF complexes then partition into different endogenous phase-separated membraneless compartments, such as P-bodies, stress granules or neuronal RNA granules. In Danio rerio (Zebrafish), this protein is YTH domain-containing family protein 2.